Reading from the N-terminus, the 477-residue chain is Bifunctional protein HldE (477 aa).

Residues 1 to 318 are ribokinase; the sequence is MKVTLPEFER…ENAVRGRADT (318 aa). At Lys179 the chain carries N6-acetyllysine. 195–198 contributes to the ATP binding site; the sequence is NLSE. Residue Asp264 is part of the active site. The cytidylyltransferase stretch occupies residues 344 to 477; the sequence is MTNGVFDILH…IKKIQQDKKG (134 aa).

This sequence in the N-terminal section; belongs to the carbohydrate kinase PfkB family. The protein in the C-terminal section; belongs to the cytidylyltransferase family. In terms of assembly, homodimer.

It carries out the reaction D-glycero-beta-D-manno-heptose 7-phosphate + ATP = D-glycero-beta-D-manno-heptose 1,7-bisphosphate + ADP + H(+). The catalysed reaction is D-glycero-beta-D-manno-heptose 1-phosphate + ATP + H(+) = ADP-D-glycero-beta-D-manno-heptose + diphosphate. It participates in nucleotide-sugar biosynthesis; ADP-L-glycero-beta-D-manno-heptose biosynthesis; ADP-L-glycero-beta-D-manno-heptose from D-glycero-beta-D-manno-heptose 7-phosphate: step 1/4. Its pathway is nucleotide-sugar biosynthesis; ADP-L-glycero-beta-D-manno-heptose biosynthesis; ADP-L-glycero-beta-D-manno-heptose from D-glycero-beta-D-manno-heptose 7-phosphate: step 3/4. Functionally, catalyzes the phosphorylation of D-glycero-D-manno-heptose 7-phosphate at the C-1 position to selectively form D-glycero-beta-D-manno-heptose-1,7-bisphosphate. Catalyzes the ADP transfer from ATP to D-glycero-beta-D-manno-heptose 1-phosphate, yielding ADP-D-glycero-beta-D-manno-heptose. The chain is Bifunctional protein HldE from Shigella flexneri serotype 5b (strain 8401).